The chain runs to 595 residues: Pentatricopeptide repeat-containing protein At4g21065 (595 aa).

9 PPR repeats span residues 84-118 (NVFI…GLVE), 120-154 (DTHT…GFGS), 155-185 (LIYV…MPEK), 186-220 (DLVA…GIKP), 221-255 (DGFT…GLTR), 256-290 (NLHS…NSVS), 291-317 (WTSL…MEST), 323-353 (CEIT…MREE), and 359-389 (RIEH…MPMQ). Residues 394 to 469 (IWRTLLGACT…VPGHSLVEVG (76 aa)) form a type E motif region. The tract at residues 470-500 (NRVHEFLMGDKSHPQSDAIYAKLKEMTGRLR) is type E(+) motif. The segment at 501–595 (SEGYVPQISN…NGSCSCQDYW (95 aa)) is type DYW motif.

It belongs to the PPR family. PCMP-H subfamily.

The polypeptide is Pentatricopeptide repeat-containing protein At4g21065 (PCMP-H28) (Arabidopsis thaliana (Mouse-ear cress)).